The following is a 315-amino-acid chain: Methionyl-tRNA formyltransferase (315 aa).

113-116 (SLLP) serves as a coordination point for (6S)-5,6,7,8-tetrahydrofolate.

The protein belongs to the Fmt family.

It catalyses the reaction L-methionyl-tRNA(fMet) + (6R)-10-formyltetrahydrofolate = N-formyl-L-methionyl-tRNA(fMet) + (6S)-5,6,7,8-tetrahydrofolate + H(+). Its function is as follows. Attaches a formyl group to the free amino group of methionyl-tRNA(fMet). The formyl group appears to play a dual role in the initiator identity of N-formylmethionyl-tRNA by promoting its recognition by IF2 and preventing the misappropriation of this tRNA by the elongation apparatus. This is Methionyl-tRNA formyltransferase from Edwardsiella ictaluri (strain 93-146).